We begin with the raw amino-acid sequence, 329 residues long: DNA-directed RNA polymerase subunit alpha (329 aa).

Residues 1–234 (MQGSVTEFLK…EQLDAFVELR (234 aa)) are alpha N-terminal domain (alpha-NTD). An alpha C-terminal domain (alpha-CTD) region spans residues 248–329 (FDPILLRPVD…WPPASLVDDL (82 aa)).

It belongs to the RNA polymerase alpha chain family. In terms of assembly, homodimer. The RNAP catalytic core consists of 2 alpha, 1 beta, 1 beta' and 1 omega subunit. When a sigma factor is associated with the core the holoenzyme is formed, which can initiate transcription.

The enzyme catalyses RNA(n) + a ribonucleoside 5'-triphosphate = RNA(n+1) + diphosphate. Functionally, DNA-dependent RNA polymerase catalyzes the transcription of DNA into RNA using the four ribonucleoside triphosphates as substrates. The sequence is that of DNA-directed RNA polymerase subunit alpha from Shewanella denitrificans (strain OS217 / ATCC BAA-1090 / DSM 15013).